The sequence spans 95 residues: CRISPR-associated endoribonuclease Cas2 1 (95 aa).

Asp11 provides a ligand contact to Mg(2+).

This sequence belongs to the CRISPR-associated endoribonuclease Cas2 protein family. As to quaternary structure, homodimer, forms a heterotetramer with a Cas1 homodimer. The cofactor is Mg(2+).

Its function is as follows. CRISPR (clustered regularly interspaced short palindromic repeat), is an adaptive immune system that provides protection against mobile genetic elements (viruses, transposable elements and conjugative plasmids). CRISPR clusters contain sequences complementary to antecedent mobile elements and target invading nucleic acids. CRISPR clusters are transcribed and processed into CRISPR RNA (crRNA). Functions as a ssRNA-specific endoribonuclease. Involved in the integration of spacer DNA into the CRISPR cassette. This is CRISPR-associated endoribonuclease Cas2 1 from Methanospirillum hungatei JF-1 (strain ATCC 27890 / DSM 864 / NBRC 100397 / JF-1).